Reading from the N-terminus, the 128-residue chain is D-ribose pyranase (128 aa).

The active-site Proton donor is the His-20. Substrate-binding positions include Asp-28, His-95, and 117–119; that span reads YSN.

This sequence belongs to the RbsD / FucU family. RbsD subfamily. In terms of assembly, homodecamer.

The protein localises to the cytoplasm. The enzyme catalyses beta-D-ribopyranose = beta-D-ribofuranose. Its pathway is carbohydrate metabolism; D-ribose degradation; D-ribose 5-phosphate from beta-D-ribopyranose: step 1/2. Functionally, catalyzes the interconversion of beta-pyran and beta-furan forms of D-ribose. This chain is D-ribose pyranase, found in Thermosipho africanus (strain TCF52B).